The following is a 398-amino-acid chain: Signal-regulatory protein beta-1 (398 aa).

Residues 1–29 form the signal peptide; the sequence is MPVPASWPHLPSPFLLMTLLLGRLTGVAG. Residues 30 to 136 enclose the Ig-like V-type domain; it reads EDELQVIQPE…SPDDVEFKSG (107 aa). At 30–371 the chain is on the extracellular side; the sequence is EDELQVIQPE…EAALAPTAPL (342 aa). 2 disulfides stabilise this stretch: cysteine 54–cysteine 120 and cysteine 169–cysteine 227. 2 consecutive Ig-like C1-type domains span residues 147–246 and 253–347; these read PSAP…ANLS and PTLE…YALE. 3 N-linked (GlcNAc...) asparagine glycosylation sites follow: asparagine 244, asparagine 269, and asparagine 291. Residues 372 to 392 form a helical membrane-spanning segment; it reads LVALLLGPKLLLVVGVSAIYI. Residues 393-398 are Cytoplasmic-facing; it reads CWKQKA.

Homodimer; disulfide-linked. Interacts with TYROBP. This interaction results in the recruitment of SYK. N-glycosylated. As to expression, detected in monocytes and dendritic cells.

The protein resides in the cell membrane. Immunoglobulin-like cell surface receptor involved in the negative regulation of receptor tyrosine kinase-coupled signaling processes. Also participates in the recruitment of tyrosine kinase SYK. Triggers activation of myeloid cells when associated with TYROBP. This chain is Signal-regulatory protein beta-1 (SIRPB1), found in Homo sapiens (Human).